Consider the following 163-residue polypeptide: SsrA-binding protein (163 aa).

The protein belongs to the SmpB family.

The protein resides in the cytoplasm. In terms of biological role, required for rescue of stalled ribosomes mediated by trans-translation. Binds to transfer-messenger RNA (tmRNA), required for stable association of tmRNA with ribosomes. tmRNA and SmpB together mimic tRNA shape, replacing the anticodon stem-loop with SmpB. tmRNA is encoded by the ssrA gene; the 2 termini fold to resemble tRNA(Ala) and it encodes a 'tag peptide', a short internal open reading frame. During trans-translation Ala-aminoacylated tmRNA acts like a tRNA, entering the A-site of stalled ribosomes, displacing the stalled mRNA. The ribosome then switches to translate the ORF on the tmRNA; the nascent peptide is terminated with the 'tag peptide' encoded by the tmRNA and targeted for degradation. The ribosome is freed to recommence translation, which seems to be the essential function of trans-translation. In Buchnera aphidicola subsp. Schizaphis graminum (strain Sg), this protein is SsrA-binding protein.